The sequence spans 443 residues: CBL-interacting protein kinase 29 (443 aa).

The region spanning 32-292 (YELGGLLGRG…TEEIITHPWF (261 aa)) is the Protein kinase domain. Residues 38 to 46 (LGRGASAKV) and Lys61 each bind ATP. Catalysis depends on Asp164, which acts as the Proton acceptor. The interval 182–207 (DFGLGAVADGALHHTLCGTPAYVAPE) is activation loop. The 35-residue stretch at 313–347 (AKFKTEFKEDDMARDMTAFDILACSPGSDLSGLFG) folds into the NAF domain. A PPI region spans residues 350–379 (PGKERVFVGEPAAAVLSRVEEAGKKEGYMV).

The protein belongs to the protein kinase superfamily. CAMK Ser/Thr protein kinase family. SNF1 subfamily. Mn(2+) is required as a cofactor.

The enzyme catalyses L-seryl-[protein] + ATP = O-phospho-L-seryl-[protein] + ADP + H(+). The catalysed reaction is L-threonyl-[protein] + ATP = O-phospho-L-threonyl-[protein] + ADP + H(+). Its function is as follows. CIPK serine-threonine protein kinases interact with CBL proteins. Binding of a CBL protein to the regulatory NAF domain of CIPK protein lead to the activation of the kinase in a calcium-dependent manner. The polypeptide is CBL-interacting protein kinase 29 (CIPK29) (Oryza sativa subsp. japonica (Rice)).